The primary structure comprises 784 residues: DNA repair and recombination protein RAD54-like (784 aa).

The required for chromatin remodeling, strand pairing activities and coupling of ATPase activity stretch occupies residues 2-9 (RRSLAPSQ). Position 22 is a phosphothreonine (Thr-22). Positions 169-344 (EGKKGNFNGC…FSLVNFVNPE (176 aa)) constitute a Helicase ATP-binding domain. Residue 182–189 (DEMGLGKT) participates in ATP binding. The DEGH box signature appears at 295–298 (DEGH). The Helicase C-terminal domain occupies 501–658 (LLDFMLATIR…NNESAEKHFT (158 aa)). Residues 742-784 (QAIKESEETKQEAEDTSIPAKSKRKRSTTPESDDCNDEDFKGF) form a disordered region. Basic and acidic residues predominate over residues 745 to 754 (KESEETKQEA).

Belongs to the SNF2/RAD54 helicase family. As to quaternary structure, interacts (via N-terminus) with spn-A/Rad51.

The protein resides in the nucleus. Involved in mitotic DNA repair and meiotic recombination. Functions in the recombinational DNA repair pathway. Essential for interhomolog gene conversion (GC), but may have a less important role in intersister GC than spn-A/Rad51. In the presence of DNA, spn-A/Rad51 enhances the ATPase activity of okr/Rad54. This is DNA repair and recombination protein RAD54-like from Drosophila willistoni (Fruit fly).